A 1219-amino-acid polypeptide reads, in one-letter code: MVGMSRIILNNLFFFRCVVAVFSAHSLVISGAVHAGVQISQSPLHGGGDVPGNLAIVASIEFPTVISVANLADTYTPGVRYVGYFDSNKCYKYHYSSRELDRYFYPVASPRPQANYGCNTTGGVWAGNFLNWAATQTIDPFRSALTGGYRVRDTANETILEKAVMDRAYPGNFPRRTIEGLALTTSVPAQWLRFRMRIDGLGNRMRFTQFPGLSTDPLNTEGQPYDPSRHPLNSNDRGVYEVSVRVKVCDASVGLESNCVAYPSGFYKPEGLVQEYSKRVRYSVFSYKNDDYYLDDGGVLRARQKFVGPKTYYPEQGEKTNPHAEWHPRTGVLYDNPNPEDAKATTHRVGRTIGNSGVINYLNKFSQMETGKNTKGFDPVSELYYTAYRYFKRLGNVPEYSVLTGSVNEKYQQADAFPVITDWDDPIRYACQSNVVLGIGDTHTNFDKNLPGNTNTTGEPVKPQAVRNDRSIDVVKRMAQIFQMEGMRQQDAMTSALAPSFNFLVPGAGNNSAYIAALAYDAHTKDMRPDLEGDQLLTTHWVDVVEGGDYKIPISTNQYWLAAKYGGFQVPAGYDPDKTVNPLSEATWWTNGEYVNGDTKAKRADNFYIAADAEKMVASLKHAFSRIVAEIKGAGTGLSSNSARLETGAVTYQAQFFSGTWRGDLIAYHVDKVTGALTPFWNANFPAWEQRVIKFANATTLQDFTKKNLGQTALASASAQQINYLRGDRSQEGNVPGKLRIRSGIMGDIVNSQPLYVGAPNGRLYTTANFTGASAYAAFAAQQANRVPVVYVGANDGMLHAFDANTGKEIFAFVPRAAMPKLLEYTDQNYGHQYYVDGELTAADIYDTKLGWRSVLVGTLGRGGKGLFALDVTDPSNIRLLWDKTSADIGGLGNTLSKPMIAQTSDGTWSVLLGNGPNSTADNAQLIVMNLLTGHAAQVPVSKTSNNGLSGVFPWSSQSNGITDRVYAGDLLGTLWRFTFSDNAWKVAPLFTATYQGKAQPISATPLGAIERSTGRMWIFFGTGRALSSHDMDNKEVQSWYGLIDQGTTIPGRTRLSQVQIVDEGVVNGYAVRTVSDPKNIGTDGWYMDLISPKSGKQGERMIVSNMFRGAALIGTTRIPDNSDICKLSGSGFVMAINPFTGGRLGQWFFDLNTGGGSGGALNGNPVSGVGVSSAPNSPVFTGNIMQIGADDGTVTSLKTPSSGGLNINRVSWREILRP.

The first 35 residues, 1 to 35, serve as a signal peptide directing secretion; it reads MVGMSRIILNNLFFFRCVVAVFSAHSLVISGAVHA. A disordered region spans residues 212–234; sequence GLSTDPLNTEGQPYDPSRHPLNS. 4 residues coordinate Ca(2+): Q958, N960, I962, and D964.

Belongs to the PilY1 family.

The protein localises to the fimbrium. Its function is as follows. One of the three PilY1 homologs of X.fastidiosa, which are involved in bacterial twitching motility as component of the filamentous type IV pili (T4P). The sequence is that of Type IV pilus biogenesis factor PilY1 homolog PD_0502 from Xylella fastidiosa (strain Temecula1 / ATCC 700964).